We begin with the raw amino-acid sequence, 484 residues long: Probable glycine dehydrogenase (decarboxylating) subunit 2 (484 aa).

K264 is subject to N6-(pyridoxal phosphate)lysine.

It belongs to the GcvP family. C-terminal subunit subfamily. The glycine cleavage system is composed of four proteins: P, T, L and H. In this organism, the P 'protein' is a heterodimer of two subunits. The cofactor is pyridoxal 5'-phosphate.

The catalysed reaction is N(6)-[(R)-lipoyl]-L-lysyl-[glycine-cleavage complex H protein] + glycine + H(+) = N(6)-[(R)-S(8)-aminomethyldihydrolipoyl]-L-lysyl-[glycine-cleavage complex H protein] + CO2. Functionally, the glycine cleavage system catalyzes the degradation of glycine. The P protein binds the alpha-amino group of glycine through its pyridoxal phosphate cofactor; CO(2) is released and the remaining methylamine moiety is then transferred to the lipoamide cofactor of the H protein. In Legionella pneumophila (strain Corby), this protein is Probable glycine dehydrogenase (decarboxylating) subunit 2.